We begin with the raw amino-acid sequence, 242 residues long: Caspase-14 (242 aa).

Residues 1–5 (MSNPR) constitute a propeptide that is removed on maturation. Residues His89 and Cys132 contribute to the active site. Residues 147–152 (EIVMVI) constitute a propeptide that is removed on maturation.

This sequence belongs to the peptidase C14A family. As to quaternary structure, heterodimer of a large and a small subunit, both processed from the precursor; the mature active form is a p17/p10 dimer and the intermediate form a p20/p8 dimer. In terms of processing, maturation by proteolytic processing appears to be a two-step process. The precursor is processed by KLK7 to yield the p20/p8 intermediate form which acts on the precursor to yield the p17/p10 mature form. Initially, cleavage between Ile-152 and Lys-153 has been proposed to yield the large and small subunits of the active enzyme. In terms of tissue distribution, expressed in keratinocytes of adult skin suprabasal layers (from spinous layers to the stratum granulosum and stratum corneum) (at protein level). Expressed in keratinocytes of hair shaft and sebaceous glands (at protein level). In psoriatic skin only expressed at very low levels. The p17/10 mature form is expressed in epidermis stratum corneum, the p20/p8 intermediate form in epidermis upper granular cells of the stratum granulosum.

The protein resides in the cytoplasm. It localises to the nucleus. Its activity is regulated as follows. Inhibited by caspase-1 inhibitor YVAD-FMK and the pan-caspase inhibitor VAD-FMK. Functionally, non-apoptotic caspase involved in epidermal differentiation. Is the predominant caspase in epidermal stratum corneum. Seems to play a role in keratinocyte differentiation and is required for cornification. Regulates maturation of the epidermis by proteolytically processing filaggrin. In vitro has a preference for the substrate [WY]-X-X-D motif and is active on the synthetic caspase substrate WEHD-ACF. Involved in processing of prosaposin in the epidermis. May be involved in retinal pigment epithelium cell barrier function. Involved in DNA degradation in differentiated keratinocytes probably by cleaving DFFA/ICAD leading to liberation of DFFB/CAD. The chain is Caspase-14 (CASP14) from Homo sapiens (Human).